A 204-amino-acid polypeptide reads, in one-letter code: UPF0637 protein SA0957 (204 aa).

Belongs to the UPF0637 family.

The polypeptide is UPF0637 protein SA0957 (Staphylococcus aureus (strain N315)).